The primary structure comprises 54 residues: Small ribosomal subunit protein uS14 (54 aa).

4 residues coordinate Zn(2+): Cys19, Cys22, Cys37, and Cys40.

The protein belongs to the universal ribosomal protein uS14 family. Zinc-binding uS14 subfamily. Part of the 30S ribosomal subunit. Zn(2+) serves as cofactor.

Functionally, binds 16S rRNA, required for the assembly of 30S particles. The sequence is that of Small ribosomal subunit protein uS14 from Sulfurisphaera tokodaii (strain DSM 16993 / JCM 10545 / NBRC 100140 / 7) (Sulfolobus tokodaii).